Reading from the N-terminus, the 245-residue chain is DNA polymerase sliding clamp (245 aa).

This sequence belongs to the PCNA family. In terms of assembly, homotrimer. The subunits circularize to form a toroid; DNA passes through its center. Replication factor C (RFC) is required to load the toroid on the DNA.

Sliding clamp subunit that acts as a moving platform for DNA processing. Responsible for tethering the catalytic subunit of DNA polymerase and other proteins to DNA during high-speed replication. The chain is DNA polymerase sliding clamp from Methanosarcina barkeri (strain Fusaro / DSM 804).